The chain runs to 355 residues: DNA polymerase IV (355 aa).

Residues isoleucine 4–glycine 185 enclose the UmuC domain. Aspartate 8 and aspartate 103 together coordinate Mg(2+). Glutamate 104 is an active-site residue.

It belongs to the DNA polymerase type-Y family. Monomer. Requires Mg(2+) as cofactor.

The protein localises to the cytoplasm. It catalyses the reaction DNA(n) + a 2'-deoxyribonucleoside 5'-triphosphate = DNA(n+1) + diphosphate. Its function is as follows. Poorly processive, error-prone DNA polymerase involved in untargeted mutagenesis. Copies undamaged DNA at stalled replication forks, which arise in vivo from mismatched or misaligned primer ends. These misaligned primers can be extended by PolIV. Exhibits no 3'-5' exonuclease (proofreading) activity. May be involved in translesional synthesis, in conjunction with the beta clamp from PolIII. This Shewanella amazonensis (strain ATCC BAA-1098 / SB2B) protein is DNA polymerase IV.